Consider the following 369-residue polypeptide: Dehydrogenase pigH (369 aa).

The Enoyl reductase (ER) domain occupies 13–367 (KAPLLEVKAA…QGVSAKKIVV (355 aa)). Position 44–49 (44–49 (IDWLIQ)) interacts with NADP(+). N-linked (GlcNAc...) asparagine glycosylation is found at asparagine 79 and asparagine 101. NADP(+) is bound by residues 197–200 (SRKN) and tyrosine 215. Residues 280 to 300 (TIIFFVSWIISFKFKGLLKGI) form a helical membrane-spanning segment. An NADP(+)-binding site is contributed by 360 to 361 (VS).

It belongs to the zinc-containing alcohol dehydrogenase family.

The protein resides in the membrane. Its pathway is secondary metabolite biosynthesis. Functionally, dehydrogenase; part of the gene cluster that mediates the biosynthesis of azaphilone pigments (MonAzPs), a complex mixture of compounds with a common azaphilone skeleton very widely used as food colorants. Within the pathway, pigH might be involved in the late steps of yellow pigments monascin and ankaflavin biosynthesis. The first step of the pathway is performed by the nrPKS pigA that forms the hexaketide precursor from successive condensations of five malonyl-CoA units, with a simple acetyl-CoA starter unit. The role of esterase pigG is not clear, but it may play at most a supplementary role in the formation of the benzaldehyde produced by the pigA nrPKS. This very reactive benzaldehyde is intercepted by the pigC ketoreductase that to provide the first stable enzyme-free MonAzPs intermediate, 6-(4-hydroxy-2-oxopentyl)-3-methyl-2,4-dioxocyclohexane carbaldehyde, also known as M7PKS-1. The FAD-dependent monooxygenase pigN hydroxylates M7PKS-1 at C-4, which triggers the formation of the pyran ring. PigJ, pigK and pigD are involved in the acetylation of the pyran ring. PigJ and pigK form the two subunits of a dedicated fungal FAS that produces the side chain fatty acyl moiety of MonAzPs and pigD transfers the fatty acyl chain to the C-4 alcohol. PigM and pigO are involved in the elimination of the omega-1 alcohol. PigM acts as an O-acetyltransferase that synthesizes the putative O-11 acetyl intermediate whereas pigO eliminates acetic acid to yield an intermediate with a C10(11) double bond. The dehydration of the C-11 alcohol followed by the reduction of the C6(7) double bond by the NAD(P)H-dependent oxidoreductase pigE increases the electrophilicity of the C-5 ketone of the resulting acyl benzopyran. This in turn sets up the C-5 ketone for an intramolecular Knoevenagel aldol condensation with the C-20 enol of the side chain. This condensation affords the characteristic linear tricyclic carbon skeletons of the yellow pigments that serve as the common precursors for the classical yellow pigments monascin and ankaflavin, orange pigments rubopunctatin and monascorubrin, and red pigments ribropunctamine and monascorubramine. The FAD-dependent oxidoreductase pigF is especially invoved in the biosynthesis of orange and red pigments via desaturation of C6(7). The chain is Dehydrogenase pigH from Monascus ruber (Mold).